Here is a 346-residue protein sequence, read N- to C-terminus: Holliday junction branch migration complex subunit RuvB (346 aa).

The interval 1–182 is large ATPase domain (RuvB-L); that stretch reads MSEPARLISP…FGIPVRLTFY (182 aa). ATP-binding positions include L21, R22, G63, K66, T67, T68, 129–131, R172, Y182, and R219; that span reads EDY. Residue T67 coordinates Mg(2+). The small ATPAse domain (RuvB-S) stretch occupies residues 183–253; it reads TVEELELIVR…IADEALTRLL (71 aa). The interval 256 to 346 is head domain (RuvB-H); sequence NVGFDQLDKR…AQFRLFQEDD (91 aa). R292, R311, and R316 together coordinate DNA.

Belongs to the RuvB family. In terms of assembly, homohexamer. Forms an RuvA(8)-RuvB(12)-Holliday junction (HJ) complex. HJ DNA is sandwiched between 2 RuvA tetramers; dsDNA enters through RuvA and exits via RuvB. An RuvB hexamer assembles on each DNA strand where it exits the tetramer. Each RuvB hexamer is contacted by two RuvA subunits (via domain III) on 2 adjacent RuvB subunits; this complex drives branch migration. In the full resolvosome a probable DNA-RuvA(4)-RuvB(12)-RuvC(2) complex forms which resolves the HJ.

Its subcellular location is the cytoplasm. The enzyme catalyses ATP + H2O = ADP + phosphate + H(+). The RuvA-RuvB-RuvC complex processes Holliday junction (HJ) DNA during genetic recombination and DNA repair, while the RuvA-RuvB complex plays an important role in the rescue of blocked DNA replication forks via replication fork reversal (RFR). RuvA specifically binds to HJ cruciform DNA, conferring on it an open structure. The RuvB hexamer acts as an ATP-dependent pump, pulling dsDNA into and through the RuvAB complex. RuvB forms 2 homohexamers on either side of HJ DNA bound by 1 or 2 RuvA tetramers; 4 subunits per hexamer contact DNA at a time. Coordinated motions by a converter formed by DNA-disengaged RuvB subunits stimulates ATP hydrolysis and nucleotide exchange. Immobilization of the converter enables RuvB to convert the ATP-contained energy into a lever motion, pulling 2 nucleotides of DNA out of the RuvA tetramer per ATP hydrolyzed, thus driving DNA branch migration. The RuvB motors rotate together with the DNA substrate, which together with the progressing nucleotide cycle form the mechanistic basis for DNA recombination by continuous HJ branch migration. Branch migration allows RuvC to scan DNA until it finds its consensus sequence, where it cleaves and resolves cruciform DNA. The polypeptide is Holliday junction branch migration complex subunit RuvB (Rhizobium etli (strain ATCC 51251 / DSM 11541 / JCM 21823 / NBRC 15573 / CFN 42)).